The primary structure comprises 195 residues: Putative CheY-P phosphatase CheC1 (195 aa).

It belongs to the CheC family.

Catalyzes the dephosphorylation of CheY-P. In Halobacterium salinarum (strain ATCC 29341 / DSM 671 / R1), this protein is Putative CheY-P phosphatase CheC1 (cheC1).